The sequence spans 1223 residues: DNA-directed RNA polymerase subunit beta'' (1223 aa).

Positions 233, 307, 314, and 317 each coordinate Zn(2+).

This sequence belongs to the RNA polymerase beta' chain family. RpoC2 subfamily. In plastids the minimal PEP RNA polymerase catalytic core is composed of four subunits: alpha, beta, beta', and beta''. When a (nuclear-encoded) sigma factor is associated with the core the holoenzyme is formed, which can initiate transcription. Zn(2+) serves as cofactor.

It localises to the plastid. Its subcellular location is the chloroplast. The catalysed reaction is RNA(n) + a ribonucleoside 5'-triphosphate = RNA(n+1) + diphosphate. Functionally, DNA-dependent RNA polymerase catalyzes the transcription of DNA into RNA using the four ribonucleoside triphosphates as substrates. The protein is DNA-directed RNA polymerase subunit beta'' of Mesostigma viride (Green alga).